A 240-amino-acid polypeptide reads, in one-letter code: UDP-2,3-diacylglucosamine hydrolase (240 aa).

Residues Asp-8, His-10, Asp-41, Asn-78, and His-113 each coordinate Mn(2+). Residue 78–79 (NR) participates in substrate binding. Substrate is bound by residues Asp-121, Ser-159, Asn-163, Lys-166, and His-194. Mn(2+)-binding residues include His-194 and His-196.

This sequence belongs to the LpxH family. The cofactor is Mn(2+).

The protein resides in the cell inner membrane. It carries out the reaction UDP-2-N,3-O-bis[(3R)-3-hydroxytetradecanoyl]-alpha-D-glucosamine + H2O = 2-N,3-O-bis[(3R)-3-hydroxytetradecanoyl]-alpha-D-glucosaminyl 1-phosphate + UMP + 2 H(+). Its pathway is glycolipid biosynthesis; lipid IV(A) biosynthesis; lipid IV(A) from (3R)-3-hydroxytetradecanoyl-[acyl-carrier-protein] and UDP-N-acetyl-alpha-D-glucosamine: step 4/6. Its function is as follows. Hydrolyzes the pyrophosphate bond of UDP-2,3-diacylglucosamine to yield 2,3-diacylglucosamine 1-phosphate (lipid X) and UMP by catalyzing the attack of water at the alpha-P atom. Involved in the biosynthesis of lipid A, a phosphorylated glycolipid that anchors the lipopolysaccharide to the outer membrane of the cell. The protein is UDP-2,3-diacylglucosamine hydrolase of Shewanella baltica (strain OS195).